The chain runs to 29 residues: Cytochrome b6-f complex subunit 8 (29 aa).

Residues 3–23 (IVSLAWAVLMVVFTFSLSLVV) form a helical membrane-spanning segment.

It belongs to the PetN family. As to quaternary structure, the 4 large subunits of the cytochrome b6-f complex are cytochrome b6, subunit IV (17 kDa polypeptide, PetD), cytochrome f and the Rieske protein, while the 4 small subunits are PetG, PetL, PetM and PetN. The complex functions as a dimer.

The protein localises to the plastid. The protein resides in the chloroplast thylakoid membrane. In terms of biological role, component of the cytochrome b6-f complex, which mediates electron transfer between photosystem II (PSII) and photosystem I (PSI), cyclic electron flow around PSI, and state transitions. The polypeptide is Cytochrome b6-f complex subunit 8 (Drimys granadensis).